Reading from the N-terminus, the 1449-residue chain is MKKLFVVLVVMPLIYGDNFPCSKLTNRTIGNHWNLIETFLLNYSSRLSPNSDVVLGDYFPTVQPWFNCIRNNSNDLYVTLENLKALYWDYATENITLNHKQRLNVVVNGYPYSITVTTTRNFNSAEGAIICICKGSPPTTTTESSLTCNWGSECRLNHKFPICPSNSEANCGNMLYGLQWFADAVVAYLHGASYRISFENQWSGTVTLGDMRATTLETAGTLVDLWWFNPVYDVSYYRVNNKNGTTVVSNCTDQCASYVANVFTTQPGGFIPSDFSFNNWFLLTNSSTLVSGKLVTKQPLLVNCLWPVPSFEEAASTLCFEGAGFDQCNGPVLNNTVDVIRFNLNFTTNVQSGKGATVFSLNTTGGVTLEISCYNDTVSDSSFSSYGEMPFGVTDGPRYCYVLYNGTALKYLGTLPPSVKEIAISKWGHFYINGYNFFSTFPIDCISFNLTTGDSDVFWTIAYTSYTEALVQVENTAITKVTYCNSYVNNIKCSQLTANLNNGFYPVSSSEVGLVNKSVVLLPSFYTHTIVNITIGLGMKRSGYGQPIASTLSNITLPMQDNNTDVYCIRSDQFSVYVHSTCKSSLWDNVFKRNCTDVLDATAVIKTGTCPFSFDKLNNYLTFNKFCLSLSPVGANCKFDVAARTRTNDQVVRSLYVIYEEGDNIVGVPSDNSGLHDLSVLHLDSCTDYNIYGRTGVGIIRQTNRTLLSGLYYTSLSGDLLGFKNVSDGVIYSVTPCDVSAQAAVIDGTIVGAITSINSELLGLTHWTTTPNFYYYSIYNYTNDRTRGTAIDSNDVDCEPVITYSNIGVCKNGALVFINVTHSDGDVQPISTGNVTIPTNFTISVQVEYIQVYTTPVSIDCSRYVCNGNPRCNKLLTQYVSACQTIEQALAMGARLENMEVGSMLFVSENALKLASVEAFNSSETLDPIYKEWPNIGGSWLEGLKYILPSDNSKRKYRSAIEDLLFAKVVTSGLGTVDEDYKRCTGGYDIADLVCAQYYNGIMVLPGVANADKMTMYTASLAGGITLGALGGGAVAIPFAVAVQARLNYVALQTDVLNKNQQILASAFNQAIGNITQSFGKVNDAIHQTSRGLATVAKALAKVQDVVNTQGQALSHLTVQLQNNFQAISSSISDIYNRLDELSADAQVDRLITGRLTALNAFVSQTLTRQAEVRASRQLAKDKVNECVRSQSQRFGFCGNGTHLFSLANAAPNGMIFFHTVLLPTAYETVTAWAGICALDGDRTFGLVVKDVQLTLFRNLDDKFYLTPRTMYQPRVATSSDFVQIEGCDVLFVNATVSDLPSIIPDYIDINQTVQDILENFRPNWTVPELTFDIFNATYLNLTGEIDDLEFRSEKLHNTTVELAILIDNINNTLVNLEWLNRIETYVKWPWYVWLLIGLVVIFCIPLLLFCCCSTGCCGCIGCLGSCCHSICSRRQFENYEPIEKVHVH.

The N-terminal stretch at 1–28 (MKKLFVVLVVMPLIYGDNFPCSKLTNRT) is a signal peptide. 2 S1 regions span residues 17 to 776 (DNFP…FYYY) and 29 to 776 (IGNH…FYYY). At 29-1390 (IGNHWNLIET…NRIETYVKWP (1362 aa)) the chain is on the virion surface side. The segment at 657–801 (VIYEEGDNIV…DSNDVDCEPV (145 aa)) is interaction with host ANPEP. Residues 777–1449 (SIYNYTNDRT…YEPIEKVHVH (673 aa)) form an S2 region. Positions 1022-1043 (AGGITLGALGGGAVAIPFAVAV) are fusion peptide. A heptad repeat 1 (HR1) region spans residues 1037–1156 (IPFAVAVQAR…QVDRLITGRL (120 aa)). Coiled coils occupy residues 1104 to 1148 (QDVV…DAQV) and 1338 to 1380 (TYLN…LEWL). The heptad repeat 2 (HR2) stretch occupies residues 1305-1402 (PDYIDINQTV…VWLLIGLVVI (98 aa)). The chain crosses the membrane as a helical span at residues 1391 to 1410 (WYVWLLIGLVVIFCIPLLLF). Topologically, residues 1411 to 1449 (CCCSTGCCGCIGCLGSCCHSICSRRQFENYEPIEKVHVH) are intravirion. The KxHxx motif lies at 1445-1449 (KVHVH).

This sequence belongs to the alphacoronaviruses spike protein family. Homotrimer. During virus morphogenesis, found in a complex with M and HE proteins. Interacts with host ANPEP.

The protein localises to the virion membrane. It localises to the host endoplasmic reticulum-Golgi intermediate compartment membrane. In terms of biological role, S1 region attaches the virion to the cell membrane by interacting with host ANPEP/aminopeptidase N, initiating the infection. Binding to the receptor probably induces conformational changes in the S glycoprotein unmasking the fusion peptide of S2 region and activating membranes fusion. S2 region belongs to the class I viral fusion protein. Under the current model, the protein has at least 3 conformational states: pre-fusion native state, pre-hairpin intermediate state, and post-fusion hairpin state. During viral and target cell membrane fusion, the coiled coil regions (heptad repeats) regions assume a trimer-of-hairpins structure, positioning the fusion peptide in close proximity to the C-terminal region of the ectodomain. The formation of this structure appears to drive apposition and subsequent fusion of viral and target cell membranes. The protein is Spike glycoprotein of Porcine transmissible gastroenteritis coronavirus (strain Miller) (TGEV).